The primary structure comprises 721 residues: Peptide-N(4)-(N-acetyl-beta-glucosaminyl)asparagine amidase (721 aa).

Cys193, Cys196, Cys225, and Cys228 together coordinate Zn(2+). The active-site Nucleophile is Cys251. Active-site residues include His278 and Asp295.

Belongs to the transglutaminase-like superfamily. PNGase family. It depends on Zn(2+) as a cofactor.

The protein localises to the cytoplasm. The catalysed reaction is Hydrolysis of an N(4)-(acetyl-beta-D-glucosaminyl)asparagine residue in which the glucosamine residue may be further glycosylated, to yield a (substituted) N-acetyl-beta-D-glucosaminylamine and a peptide containing an aspartate residue.. Functionally, specifically deglycosylates the denatured form of N-linked glycoproteins in the cytoplasm and assists their proteasome-mediated degradation. Cleaves the beta-aspartyl-glucosamine (GlcNAc) of the glycan and the amide side chain of Asn, converting Asn to Asp. Prefers proteins containing high-mannose over those bearing complex type oligosaccharides. Can recognize misfolded proteins in the endoplasmic reticulum that are exported to the cytosol to be destroyed and deglycosylate them, while it has no activity toward native proteins. Deglycosylation is a prerequisite for subsequent proteasome-mediated degradation of some, but not all, misfolded glycoproteins. This is Peptide-N(4)-(N-acetyl-beta-glucosaminyl)asparagine amidase (PNG1) from Arabidopsis thaliana (Mouse-ear cress).